The following is a 234-amino-acid chain: MGAQWKVKHKEAAANAKGKIFGKLVKEITIAARNGADTATNAHLRLVVEQAKKASMPRETLERAIKKGSGQLGETVQYHRVTYEGFAPHQVPLIVECVTDNINRTVAEIRVAFRKGQLGASGSVSWDFNHVGMIEASPDSPDADPELAAIEAGAQDFEPGEEGATLFLTEPADLDAVQKALPEQGFTVLSAKLGYQPKNPVSGLSDEQMAEVEAFLEGLDNHDDVQDMFVGLAG.

The protein belongs to the TACO1 family.

The protein localises to the cytoplasm. This is Probable transcriptional regulatory protein PFL_3960 from Pseudomonas fluorescens (strain ATCC BAA-477 / NRRL B-23932 / Pf-5).